Here is a 73-residue protein sequence, read N- to C-terminus: DNA-directed RNA polymerase subunit omega (73 aa).

The protein belongs to the RNA polymerase subunit omega family. As to quaternary structure, the RNAP catalytic core consists of 2 alpha, 1 beta, 1 beta' and 1 omega subunit. When a sigma factor is associated with the core the holoenzyme is formed, which can initiate transcription.

The catalysed reaction is RNA(n) + a ribonucleoside 5'-triphosphate = RNA(n+1) + diphosphate. In terms of biological role, promotes RNA polymerase assembly. Latches the N- and C-terminal regions of the beta' subunit thereby facilitating its interaction with the beta and alpha subunits. The chain is DNA-directed RNA polymerase subunit omega from Oleidesulfovibrio alaskensis (strain ATCC BAA-1058 / DSM 17464 / G20) (Desulfovibrio alaskensis).